The primary structure comprises 453 residues: Folate transporter 1 (453 aa).

N-linked (GlcNAc...) asparagine glycosylation occurs at Asn36. A run of 5 helical transmembrane segments spans residues 48-68 (PYWT…TDIL), 73-93 (IVMI…FGKG), 102-122 (VSFG…YSIV), 136-156 (AAAL…ISTH), and 161-181 (LVLN…AIFL). N-linked (GlcNAc...) asparagine glycosylation is present at Asn260. The next 5 membrane-spanning stretches (helical) occupy residues 276–296 (VANG…SLFI), 306–326 (HGQM…YLCS), 331–351 (VLVA…LITA), 368–388 (IFGC…LVVV), and 401–421 (FVIY…FFMI).

It belongs to the reduced folate carrier (RFC) transporter (TC 2.A.48) family. As to expression, highly expressed in pharynx and posterior part of the intestine. Expressed at lower levels in the body wall muscles, head muscles, and vulva muscles. Highly expressed in the intestine of the early larva, levels decrease in the later stages of development.

It localises to the membrane. Functionally, folate transporter. The sequence is that of Folate transporter 1 (folt-1) from Caenorhabditis elegans.